We begin with the raw amino-acid sequence, 280 residues long: Shikimate dehydrogenase (NADP(+)) (280 aa).

Residues 19 to 21 (SFS) and Thr66 each bind shikimate. Lys70 serves as the catalytic Proton acceptor. Position 82 (Glu82) interacts with NADP(+). Asn91 and Asp106 together coordinate shikimate. NADP(+) contacts are provided by residues 130–134 (GSGGA) and Leu222. Residue Tyr224 coordinates shikimate. Gly245 contributes to the NADP(+) binding site.

Belongs to the shikimate dehydrogenase family. Homodimer.

It catalyses the reaction shikimate + NADP(+) = 3-dehydroshikimate + NADPH + H(+). The protein operates within metabolic intermediate biosynthesis; chorismate biosynthesis; chorismate from D-erythrose 4-phosphate and phosphoenolpyruvate: step 4/7. In terms of biological role, involved in the biosynthesis of the chorismate, which leads to the biosynthesis of aromatic amino acids. Catalyzes the reversible NADPH linked reduction of 3-dehydroshikimate (DHSA) to yield shikimate (SA). The protein is Shikimate dehydrogenase (NADP(+)) of Methanococcus maripaludis (strain C7 / ATCC BAA-1331).